Reading from the N-terminus, the 195-residue chain is Probable GTP-binding protein EngB (195 aa).

The 172-residue stretch at 24 to 195 folds into the EngB-type G domain; the sequence is GLTEVALSGR…EIWNFIETYI (172 aa). GTP contacts are provided by residues 32-39, 59-63, 77-80, 144-147, and 176-178; these read GRSNVGKS, GKTQT, DVPG, TKED, and YSS. Mg(2+) contacts are provided by S39 and T61.

This sequence belongs to the TRAFAC class TrmE-Era-EngA-EngB-Septin-like GTPase superfamily. EngB GTPase family. Requires Mg(2+) as cofactor.

Functionally, necessary for normal cell division and for the maintenance of normal septation. In Staphylococcus epidermidis (strain ATCC 35984 / DSM 28319 / BCRC 17069 / CCUG 31568 / BM 3577 / RP62A), this protein is Probable GTP-binding protein EngB.